The primary structure comprises 493 residues: Cytochrome P450 monooxygenase astA (493 aa).

Residues 5–25 (EIILLGLAALAVTYQVIVWIY) form a helical membrane-spanning segment. Residues Asn174 and Asn286 are each glycosylated (N-linked (GlcNAc...) asparagine). Residue Cys433 coordinates heme.

The protein belongs to the cytochrome P450 family. It depends on heme as a cofactor.

It is found in the membrane. The enzyme catalyses asperterpenoid A + reduced [NADPH--hemoprotein reductase] + O2 = asperterpenoid C + oxidized [NADPH--hemoprotein reductase] + H2O + H(+). The protein operates within secondary metabolite biosynthesis; terpenoid biosynthesis. In terms of biological role, cytochrome P450 monooxygenase; part of the gene cluster that mediates the biosynthesis of the asperterpenoids, sesterterpenes that exhibit anti-tuberculosis activity. The first step of the pathway is performed by the sesterterpene synthase astC that possesses both prenyl transferase and terpene cyclase activity, converting isopentenyl diphosphate and dimethylallyl diphosphate into geranylfarnesyl diphosphate (GFPP) and further converting GFPP into preasperterpenoid A, respectively. The cytochrome P450 monooxygenase astB then dually oxidizes preasperterpenoid A to produce asperterpenoid A along with a minor product, asperterpenoid B. Finally, the cytochrome P450 monooxygenase astA converts asperterpenoid A into asperterpenoid C. The polypeptide is Cytochrome P450 monooxygenase astA (Talaromyces wortmannii (Penicillium wortmannii)).